The primary structure comprises 365 residues: Parathion hydrolase (365 aa).

The tat-type signal signal peptide spans 1–29 (MQTRRVVLKSAAAAGTLLGGLAGCASVAG). 6 residues coordinate Zn(2+): His55, His57, Lys169, His201, His230, and Asp301. N6-carboxylysine is present on Lys169.

This sequence belongs to the metallo-dependent hydrolases superfamily. Phosphotriesterase family. In terms of assembly, homodimer. Zn(2+) serves as cofactor. Predicted to be exported by the Tat system. The position of the signal peptide cleavage has been experimentally proven.

It is found in the cell membrane. The catalysed reaction is An aryl dialkyl phosphate + H2O = dialkyl phosphate + an aryl alcohol.. Has an unusual substrate specificity for synthetic organophosphate triesters and phosphorofluoridates. All of the phosphate triesters found to be substrates are synthetic compounds. The identity of any naturally occurring substrate for the enzyme is unknown. Has no detectable activity with phosphate monoesters or diesters and no activity as an esterase or protease. It catalyzes the hydrolysis of the insecticide paraoxon at a rate approaching the diffusion limit and thus appears to be optimally evolved for utilizing this synthetic substrate. This is Parathion hydrolase (opd) from Brevundimonas diminuta (Pseudomonas diminuta).